The chain runs to 180 residues: ATP synthase subunit b (180 aa).

A helical transmembrane segment spans residues 26–46; sequence IPLMLATLAALVISIFFLTYF.

Belongs to the ATPase B chain family. As to quaternary structure, F-type ATPases have 2 components, F(1) - the catalytic core - and F(0) - the membrane proton channel. F(1) has five subunits: alpha(3), beta(3), gamma(1), delta(1), epsilon(1). F(0) has three main subunits: a(1), b(2) and c(10-14). The alpha and beta chains form an alternating ring which encloses part of the gamma chain. F(1) is attached to F(0) by a central stalk formed by the gamma and epsilon chains, while a peripheral stalk is formed by the delta and b chains.

The protein localises to the cell membrane. In terms of biological role, f(1)F(0) ATP synthase produces ATP from ADP in the presence of a proton or sodium gradient. F-type ATPases consist of two structural domains, F(1) containing the extramembraneous catalytic core and F(0) containing the membrane proton channel, linked together by a central stalk and a peripheral stalk. During catalysis, ATP synthesis in the catalytic domain of F(1) is coupled via a rotary mechanism of the central stalk subunits to proton translocation. Functionally, component of the F(0) channel, it forms part of the peripheral stalk, linking F(1) to F(0). The sequence is that of ATP synthase subunit b from Mycoplasmopsis pulmonis (strain UAB CTIP) (Mycoplasma pulmonis).